The chain runs to 573 residues: Squalene monooxygenase (573 aa).

The Cytoplasmic portion of the chain corresponds to 1–19 (MWTFLGIATFTYFYKKCGD). An interaction with MARCHF6 region spans residues 1 to 99 (MWTFLGIATF…EQLESKRRRK (99 aa)). An intramembrane segment occupies 20–40 (VTLANKELLLCVLVFLSLGLV). The Cytoplasmic segment spans residues 41 to 573 (LSYRCRHRNG…IYSEMKYLVH (533 aa)). The segment at 61-72 (QFAAFSDILSAL) is required for degradation in response to high membrane cholesterol levels. The segment at 100 to 573 (EVNLSETTLT…IYSEMKYLVH (474 aa)) is sufficient for catalytic activity. FAD contacts are provided by residues 132-133 (VL), 152-153 (ER), R160, R233, V249, D407, and M420. Residues 515–573 (PLLLIRHFFSVAVYATYFCFKSEPWATKPRALFSSGAILYKACSIIFPLIYSEMKYLVH) are hydrophobic; mediates interaction with membranes.

Belongs to the squalene monooxygenase family. As to quaternary structure, interacts (via N-terminal domain) with MARCHF6. Interacts with SMIM22; this interaction modulates lipid droplet formation. FAD serves as cofactor. In terms of processing, ubiquitinated by MARCHF6 in response to high cholesterol levels in intracellular membranes, leading to proteasomal degradation. As to expression, detected in lever (at protein level).

Its subcellular location is the microsome membrane. The protein resides in the endoplasmic reticulum membrane. The enzyme catalyses squalene + reduced [NADPH--hemoprotein reductase] + O2 = (S)-2,3-epoxysqualene + oxidized [NADPH--hemoprotein reductase] + H2O + H(+). It participates in terpene metabolism; lanosterol biosynthesis; lanosterol from farnesyl diphosphate: step 2/3. Its activity is regulated as follows. Inhibited by NB-598 ((E)N-ethyl-N-(6,6-dimethyl-2-hepten-4-ynyl)-3-[(3,3'-bi-thiophen-5-yl)methoxy]benzene-methanamine). Contrary to fungal enzymes, the mammalian enzyme is only slightly inhibited by terbinafine. Its function is as follows. Catalyzes the stereospecific oxidation of squalene to (S)-2,3-epoxysqualene, and is considered to be a rate-limiting enzyme in steroid biosynthesis. This Rattus norvegicus (Rat) protein is Squalene monooxygenase (Sqle).